We begin with the raw amino-acid sequence, 66 residues long: Large ribosomal subunit protein uL29 (66 aa).

It belongs to the universal ribosomal protein uL29 family.

The sequence is that of Large ribosomal subunit protein uL29 from Thermosipho africanus (strain TCF52B).